The following is a 1020-amino-acid chain: LLGL scribble cell polarity complex component 2 (1020 aa).

WD repeat units lie at residues 36–69, 76–117, 132–169, 193–227, 233–264, 282–324, 332–364, 386–462, 506–581, 590–651, 710–766, 775–827, 832–884, and 898–921; these read SALG…FMGL, VTQV…IGRF, VTAV…ENNI, TLHE…VQHF, LESV…GEDP, AISK…KTHE, IIDF…VVDL, TCSH…YKLS, QKIH…FALV, TAIA…LRQS, VRTL…KEIQ, GLVV…VSSK, LTAV…VHYP, and VFTK…SLST. The disordered stretch occupies residues 935-968; that stretch reads LQMRSKSPSSPVHRDLPDGVPTEHRNFKGDSEGY. A compositionally biased stretch (basic and acidic residues) spans 946–965; it reads VHRDLPDGVPTEHRNFKGDS.

The protein belongs to the WD repeat L(2)GL family. Phosphorylated.

It is found in the cytoplasm. It localises to the cytoskeleton. Essential for hemidesmosome formation and maintenance of the cytoskeleton elements as well as cellular morphology in the basal epidermis during development. Also involved in regulating growth of the basal epidermis. This chain is LLGL scribble cell polarity complex component 2 (llgl2), found in Danio rerio (Zebrafish).